Reading from the N-terminus, the 219-residue chain is Rho-related protein racN (219 aa).

12–19 (GDVTIGKT) is a binding site for GTP. Residues 33-41 (YIPTIFDNH) carry the Effector region motif. Residues 58–62 (DTGGG) and 114–117 (TKTD) contribute to the GTP site. Position 216 is a cysteine methyl ester (cysteine 216). The S-geranylgeranyl cysteine moiety is linked to residue cysteine 216. The propeptide at 217-219 (IIC) is removed in mature form.

It belongs to the small GTPase superfamily. Rho family.

It is found in the cell membrane. The sequence is that of Rho-related protein racN (racN) from Dictyostelium discoideum (Social amoeba).